The primary structure comprises 290 residues: ATP synthase gamma chain (290 aa).

This sequence belongs to the ATPase gamma chain family. F-type ATPases have 2 components, CF(1) - the catalytic core - and CF(0) - the membrane proton channel. CF(1) has five subunits: alpha(3), beta(3), gamma(1), delta(1), epsilon(1). CF(0) has three main subunits: a, b and c.

It is found in the cell inner membrane. Its function is as follows. Produces ATP from ADP in the presence of a proton gradient across the membrane. The gamma chain is believed to be important in regulating ATPase activity and the flow of protons through the CF(0) complex. The sequence is that of ATP synthase gamma chain from Dictyoglomus turgidum (strain DSM 6724 / Z-1310).